The chain runs to 140 residues: MAKRPLLLLLLAVWVLAGELWLRTEARASPYGVKLCGREFIRAVIFTCGGSRWRRSDMLAHEALGDVFSDTDSNADSELDEAMASSEWLALTKSPETFYGVQPGWQRTPGALRGSRDVLAGLSSNCCKWGCSKSEISSLC.

An N-terminal signal peptide occupies residues 1-26; sequence MAKRPLLLLLLAVWVLAGELWLRTEA. Cystine bridges form between Cys-36-Cys-127, Cys-48-Cys-140, and Cys-126-Cys-131. Positions 56–116 are cleaved as a propeptide — connecting peptide; that stretch reads SDMLAHEALG…RTPGALRGSR (61 aa).

It belongs to the insulin family. As to quaternary structure, heterodimer of a B chain and an A chain linked by two disulfide bonds.

The protein resides in the secreted. Its function is as follows. May play a role in neuropeptide signaling processes. Ligand for LGR7, RXFP3 and RXFP4. The protein is Relaxin-3 (RLN3) of Sus scrofa (Pig).